The chain runs to 295 residues: Protease HtpX (295 aa).

2 consecutive transmembrane segments (helical) span residues 4–24 (IVLFLLTNLAVMLVFGIILSL) and 34–54 (GLMIMAGLFGFGGAFVSLLMS). H139 serves as a coordination point for Zn(2+). Residue E140 is part of the active site. H143 provides a ligand contact to Zn(2+). The next 2 helical transmembrane spans lie at 147 to 167 (GDMVTMTLLQGIVNTFVIFIS) and 194 to 214 (IVYMVASMVLEIVFGILASII). E223 is a binding site for Zn(2+).

The protein belongs to the peptidase M48B family. Requires Zn(2+) as cofactor.

It localises to the cell inner membrane. This Photorhabdus laumondii subsp. laumondii (strain DSM 15139 / CIP 105565 / TT01) (Photorhabdus luminescens subsp. laumondii) protein is Protease HtpX.